The chain runs to 363 residues: Flagellar P-ring protein (363 aa).

The signal sequence occupies residues 1 to 20; sequence MKLKLILAVAMLAFSLPSQA.

Belongs to the FlgI family. As to quaternary structure, the basal body constitutes a major portion of the flagellar organelle and consists of four rings (L,P,S, and M) mounted on a central rod.

The protein resides in the periplasm. It localises to the bacterial flagellum basal body. Assembles around the rod to form the L-ring and probably protects the motor/basal body from shearing forces during rotation. In Shewanella sp. (strain MR-4), this protein is Flagellar P-ring protein.